Reading from the N-terminus, the 158-residue chain is Urease subunit beta (158 aa).

A disordered region spans residues 113–158 (EDDWRRSSAAGDAPQELPQVEAAERGRKLDEATDVGTEDTPEEGQN). Basic and acidic residues predominate over residues 134–143 (AAERGRKLDE). Residues 144-158 (ATDVGTEDTPEEGQN) are compositionally biased toward acidic residues.

This sequence belongs to the urease beta subunit family. As to quaternary structure, heterotrimer of UreA (gamma), UreB (beta) and UreC (alpha) subunits. Three heterotrimers associate to form the active enzyme.

The protein resides in the cytoplasm. The enzyme catalyses urea + 2 H2O + H(+) = hydrogencarbonate + 2 NH4(+). Its pathway is nitrogen metabolism; urea degradation; CO(2) and NH(3) from urea (urease route): step 1/1. This chain is Urease subunit beta, found in Corynebacterium glutamicum (strain R).